A 209-amino-acid chain; its full sequence is Ribosomal RNA large subunit methyltransferase E (209 aa).

Gly63, Trp65, Asp83, Asp99, and Asp124 together coordinate S-adenosyl-L-methionine. Residue Lys164 is the Proton acceptor of the active site.

This sequence belongs to the class I-like SAM-binding methyltransferase superfamily. RNA methyltransferase RlmE family.

The protein localises to the cytoplasm. The catalysed reaction is uridine(2552) in 23S rRNA + S-adenosyl-L-methionine = 2'-O-methyluridine(2552) in 23S rRNA + S-adenosyl-L-homocysteine + H(+). Functionally, specifically methylates the uridine in position 2552 of 23S rRNA at the 2'-O position of the ribose in the fully assembled 50S ribosomal subunit. This chain is Ribosomal RNA large subunit methyltransferase E, found in Pseudoalteromonas atlantica (strain T6c / ATCC BAA-1087).